Reading from the N-terminus, the 170-residue chain is Probable inosine/xanthosine triphosphatase (170 aa).

Glutamate 31 contributes to the Mg(2+) binding site.

It belongs to the YjjX NTPase family. Homodimer. Mg(2+) is required as a cofactor. Requires Mn(2+) as cofactor.

The catalysed reaction is XTP + H2O = XDP + phosphate + H(+). The enzyme catalyses ITP + H2O = IDP + phosphate + H(+). Its function is as follows. Phosphatase that hydrolyzes non-canonical purine nucleotides such as XTP and ITP to their respective diphosphate derivatives. Probably excludes non-canonical purines from DNA/RNA precursor pool, thus preventing their incorporation into DNA/RNA and avoiding chromosomal lesions. The chain is Probable inosine/xanthosine triphosphatase from Oceanobacillus iheyensis (strain DSM 14371 / CIP 107618 / JCM 11309 / KCTC 3954 / HTE831).